The chain runs to 326 residues: ATP phosphoribosyltransferase regulatory subunit (326 aa).

It belongs to the class-II aminoacyl-tRNA synthetase family. HisZ subfamily. In terms of assembly, heteromultimer composed of HisG and HisZ subunits.

The protein localises to the cytoplasm. Its pathway is amino-acid biosynthesis; L-histidine biosynthesis; L-histidine from 5-phospho-alpha-D-ribose 1-diphosphate: step 1/9. In terms of biological role, required for the first step of histidine biosynthesis. May allow the feedback regulation of ATP phosphoribosyltransferase activity by histidine. The sequence is that of ATP phosphoribosyltransferase regulatory subunit from Streptococcus thermophilus (strain ATCC BAA-491 / LMD-9).